The sequence spans 487 residues: Sodium-coupled neutral amino acid symporter 1 (487 aa).

Residues 1-74 (MMHFKSGLEL…EYIPGTTSLG (74 aa)) are Cytoplasmic-facing. Serine 6 is modified (phosphoserine). At threonine 11 the chain carries Phosphothreonine. Phosphoserine is present on residues serine 25, serine 28, serine 49, and serine 52. Threonine 54 bears the Phosphothreonine mark. Serine 56 is modified (phosphoserine). Residues 75–97 (MSVFNLSNAIMGSGILGLAFALA) traverse the membrane as a helical segment. Residues 98 to 112 (NTGILLFLVLLTSVT) are Extracellular-facing. Residues 113–133 (LLSIYSINLLLICSKETGCMV) traverse the membrane as a helical segment. The Cytoplasmic segment spans residues 134 to 147 (YEKLGEQVFGTTGK). The helical transmembrane segment at 148–168 (FVIFGATSLQNTGAMLSYLFI) threads the bilayer. The Extracellular portion of the chain corresponds to 169–188 (VKNELPSAIKFLMGKEETFS). A helical transmembrane segment spans residues 189–211 (AWYVDGRVLVVIVTFGIILPLCL). Residues 212 to 216 (LKNLG) are Cytoplasmic-facing. Residues 217 to 237 (YLGYTSGFSLSCMVFFLIVVI) traverse the membrane as a helical segment. The Extracellular segment spans residues 238-275 (YKKFQIPCIVPELNSTISANSTNADTCTPKYVTFNSKT). Cysteine 245 and cysteine 264 are disulfide-bonded. N-linked (GlcNAc...) asparagine glycosylation is found at asparagine 251 and asparagine 257. Residues 276-296 (VYALPTIAFAFVCHPSVLPIY) form a helical membrane-spanning segment. Residues 297-312 (SELKDRSQKKMQMVSN) lie on the Cytoplasmic side of the membrane. A helical transmembrane segment spans residues 313-333 (ISFFAMFVMYFLTAIFGYLTF). Residues 334–350 (YDNVQSDLLHKYQSKDD) lie on the Extracellular side of the membrane. A helical membrane pass occupies residues 351 to 371 (ILILTVRLAVIVAVILTVPVL). Residues 372–393 (FFTVRSSLFELAKKTKFNLCRH) are Cytoplasmic-facing. The helical transmembrane segment at 394–414 (TVVTCILLVVINLLVIFIPSM) threads the bilayer. Over 415-416 (KD) the chain is Extracellular. A helical transmembrane segment spans residues 417–437 (IFGVVGVTSANMLIFILPSSL). The Cytoplasmic segment spans residues 438-452 (YLKITDQDGDKGTQR). A helical membrane pass occupies residues 453–473 (IWAALFLGLGVLFSLVSIPLV). Residues 474-487 (IYDWACSSSSDEGH) are Extracellular-facing.

This sequence belongs to the amino acid/polyamine transporter 2 family. Post-translationally, N-glycosylation plays an important role in the L-glutamine transport. As to expression, expressed in the cerebral cortex by pyramidal and GABAergic neurons, astrocytes and other non-neuronal cells (at protein level). Expressed in placenta, heart, lung, skeletal muscle, spleen, stomach and testis. Highly expressed in cytotrophoblast cells from term placenta.

It localises to the cell membrane. The catalysed reaction is L-glutamine(in) + Na(+)(in) = L-glutamine(out) + Na(+)(out). The enzyme catalyses L-alanine(in) + Na(+)(in) = L-alanine(out) + Na(+)(out). It catalyses the reaction L-asparagine(in) + Na(+)(in) = L-asparagine(out) + Na(+)(out). It carries out the reaction L-histidine(in) + Na(+)(in) = L-histidine(out) + Na(+)(out). The catalysed reaction is L-serine(in) + Na(+)(in) = L-serine(out) + Na(+)(out). The enzyme catalyses L-cysteine(in) + Na(+)(in) = L-cysteine(out) + Na(+)(out). It catalyses the reaction L-methionine(in) + Na(+)(in) = L-methionine(out) + Na(+)(out). It carries out the reaction glycine(in) + Na(+)(in) = glycine(out) + Na(+)(out). The catalysed reaction is L-threonine(in) + Na(+)(in) = L-threonine(out) + Na(+)(out). The enzyme catalyses L-proline(in) + Na(+)(in) = L-proline(out) + Na(+)(out). With respect to regulation, inhibited by alpha-(methylamino)isobutyric acid (MeAIB). Inhibited by lithium, potassium, choline ions, N-methylglucamine. The pH dependence has an allosteric effect on the transport. In terms of biological role, symporter that cotransports short-chain neutral amino acids and sodium ions from the extraccellular to the intracellular side of the cell membrane. The transport is elctrogenic, pH dependent and driven by the Na(+) electrochemical gradient. Participates in the astroglia-derived glutamine transport into GABAergic interneurons for neurotransmitter GABA de novo synthesis. May also contributes to amino acid transport in placental trophoblasts. Also regulates synaptic plasticity. This chain is Sodium-coupled neutral amino acid symporter 1 (SLC38A1), found in Homo sapiens (Human).